We begin with the raw amino-acid sequence, 275 residues long: AA9 family lytic polysaccharide monooxygenase AA9-X282 (275 aa).

Positions 1-17 (MFTKLIIAASLAASVAA) are cleaved as a signal peptide. Residue His-18 participates in Cu(2+) binding. At Thr-20 the chain carries Phosphothreonine. Ser-43 and Ser-49 each carry phosphoserine. Thr-50 is modified (phosphothreonine). Ser-58 bears the Phosphoserine mark. Cys-66 and Cys-185 are oxidised to a cystine. Position 96 (His-96) interacts with Cu(2+). Position 130 is a phosphoserine (Ser-130). 2 residues coordinate O2: His-171 and Gln-180. Tyr-182 is a binding site for Cu(2+). Positions 236-265 (TSPAVANTPYPTTATWNTALQPSTVPTAVP) are X282 extension. A 9res motif motif is present at residues 268–275 (GTPGIGKA).

Belongs to the polysaccharide monooxygenase AA9 family. The cofactor is Cu(2+).

The protein resides in the secreted. The catalysed reaction is [(1-&gt;4)-beta-D-glucosyl]n+m + reduced acceptor + O2 = 4-dehydro-beta-D-glucosyl-[(1-&gt;4)-beta-D-glucosyl]n-1 + [(1-&gt;4)-beta-D-glucosyl]m + acceptor + H2O.. Its function is as follows. Lytic polysaccharide monooxygenase (LPMO) that depolymerizes crystalline and amorphous polysaccharides via the oxidation of scissile alpha- or beta-(1-4)-glycosidic bonds, yielding C1 oxidation products. Catalysis by LPMOs requires the reduction of the active-site copper from Cu(II) to Cu(I) by a reducing agent and H(2)O(2) or O(2) as a cosubstrate. Shows only weak binding properties to cellulose, and low cellulolytic oxidative activity which questions the involvement of X282 extension-containing AA9 proteins in the degradation of plant cell wall and opens new avenues as to the divergence of function of some AA9 members. In Trametes coccinea (strain BRFM310) (Pycnoporus coccineus), this protein is AA9 family lytic polysaccharide monooxygenase AA9-X282.